The primary structure comprises 187 residues: Dihydrofolate reductase (187 aa).

A DHFR domain is found at 4-185; sequence PLNCIVAVSQ…IKYKFEVYEK (182 aa). NADP(+)-binding positions include Ala10 and 16–22; that span reads GIGKNGD. Residue 31-36 coordinates substrate; the sequence is EFKYFQ. Lys33 bears the N6-acetyllysine; alternate mark. Residue Lys33 is modified to N6-succinyllysine; alternate. An NADP(+)-binding site is contributed by 55–57; the sequence is RKT. Substrate is bound at residue Arg71. NADP(+)-binding positions include 77–79 and 117–124; these read SRE and GGSSVYQE.

This sequence belongs to the dihydrofolate reductase family. In terms of assembly, homodimer.

It is found in the mitochondrion. It localises to the cytoplasm. It catalyses the reaction (6S)-5,6,7,8-tetrahydrofolate + NADP(+) = 7,8-dihydrofolate + NADPH + H(+). It functions in the pathway cofactor biosynthesis; tetrahydrofolate biosynthesis; 5,6,7,8-tetrahydrofolate from 7,8-dihydrofolate: step 1/1. Functionally, key enzyme in folate metabolism. Contributes to the de novo mitochondrial thymidylate biosynthesis pathway. Catalyzes an essential reaction for de novo glycine and purine synthesis, and for DNA precursor synthesis. Binds its own mRNA. This is Dihydrofolate reductase (Dhfr) from Rattus norvegicus (Rat).